A 394-amino-acid polypeptide reads, in one-letter code: Acetyl-CoA acetyltransferase (394 aa).

Cys-88 serves as the catalytic Acyl-thioester intermediate. Active-site proton acceptor residues include His-349 and Cys-379.

Belongs to the thiolase-like superfamily. Thiolase family.

The protein resides in the cytoplasm. The enzyme catalyses 2 acetyl-CoA = acetoacetyl-CoA + CoA. Its pathway is metabolic intermediate biosynthesis; (R)-mevalonate biosynthesis; (R)-mevalonate from acetyl-CoA: step 1/3. The chain is Acetyl-CoA acetyltransferase (atoB) from Escherichia coli (strain K12).